Reading from the N-terminus, the 343-residue chain is Signal peptide peptidase 2 (343 aa).

Residues 1-19 lie on the Lumenal side of the membrane; sequence MKTHERAANLALAGLSLAP. The chain crosses the membrane as a helical span at residues 20-40; that stretch reads LVVKVNPNANVILTACLAVYV. Residues 41 to 62 lie on the Cytoplasmic side of the membrane; the sequence is GCYRSVKPTPPAETMSKEHAMR. The chain crosses the membrane as a helical span at residues 63–83; sequence FPLVGSAMLLSLFLLFKFLSK. The Lumenal portion of the chain corresponds to 84-89; it reads DLVNTV. A helical membrane pass occupies residues 90-110; sequence LTAYFFILGIAALCATLLPSI. Topologically, residues 111–141 are cytoplasmic; it reads KRFLPKEWNDNAIVWRAPLFHSLSVEFTRSQ. A helical membrane pass occupies residues 142-162; the sequence is VVASIPGFFFCIWYAAKKHWL. Residues 163-165 are Lumenal-facing; the sequence is ANN. A helical transmembrane segment spans residues 166 to 186; sequence VLGISFCIQGIEMLSLGSFKT. The Cytoplasmic segment spans residues 187–188; it reads GA. The chain crosses the membrane as a helical span at residues 189–209; that stretch reads ILLSGLFFYDIFWVFFTPVMV. D198 is an active-site residue. At 210–230 the chain is on the lumenal side; that stretch reads SVAKSFDAPIKLLFPTGDAAR. Residues 231–251 traverse the membrane as a helical segment; the sequence is PFSMLGLGDIVIPGIFVALAL. D239 is an active-site residue. The Cytoplasmic portion of the chain corresponds to 252–266; that stretch reads RFDVSRGIKNRYFNS. The chain crosses the membrane as a helical span at residues 267–287; the sequence is AFLGYTVGLTVTIIVMNWFQA. The Lumenal segment spans residues 288 to 290; the sequence is AQP. The PAL motif lies at 290 to 292; it reads PAL. Residues 291-311 traverse the membrane as a helical segment; sequence ALLYIVPGVIGFVAVHCLWNG. Residues 312 to 343 are Cytoplasmic-facing; the sequence is EVKPLLEYNESKAEEEEACEEDTDSKQNKKKE. Residues 324-334 show a composition bias toward acidic residues; that stretch reads AEEEEACEEDT. Residues 324–343 form a disordered region; that stretch reads AEEEEACEEDTDSKQNKKKE. The Endoplasmic reticulum targeting signal motif lies at 340 to 343; that stretch reads KKKE.

This sequence belongs to the peptidase A22B family. Ubiquitous.

The protein resides in the endoplasmic reticulum membrane. Intramembrane-cleaving aspartic protease (I-CLiP) that cleaves type II membrane signal peptides in the hydrophobic plane of the membrane. Catalyzes intramembrane proteolysis of some signal peptides after they have been cleaved from a preprotein, resulting in the release of the fragment from the ER membrane into the cytoplasm. This chain is Signal peptide peptidase 2 (SPP2), found in Oryza sativa subsp. japonica (Rice).